A 217-amino-acid chain; its full sequence is Large ribosomal subunit protein uL3 (217 aa).

Residues 134-146 (GRATHGNSRSHNV) are compositionally biased toward polar residues. Positions 134-154 (GRATHGNSRSHNVPGSIGMAQ) are disordered. Gln-154 carries the post-translational modification N5-methylglutamine.

Belongs to the universal ribosomal protein uL3 family. In terms of assembly, part of the 50S ribosomal subunit. Forms a cluster with proteins L14 and L19. In terms of processing, methylated by PrmB.

Its function is as follows. One of the primary rRNA binding proteins, it binds directly near the 3'-end of the 23S rRNA, where it nucleates assembly of the 50S subunit. The chain is Large ribosomal subunit protein uL3 from Burkholderia cenocepacia (strain HI2424).